Consider the following 568-residue polypeptide: Natural resistance-associated macrophage protein 2 (568 aa).

A compositionally biased stretch (basic and acidic residues) spans 1–20 (MVLDPKEKMPDDGASGDHGD). Residues 1–45 (MVLDPKEKMPDDGASGDHGDSASLGAINPAYSNSSLPHSTGDSEE) are disordered. Residues 1-69 (MVLDPKEKMP…EEYSCFSFRK (69 aa)) are Cytoplasmic-facing. Polar residues predominate over residues 30-40 (AYSNSSLPHST). Residues 70–90 (LWAFTGPGFLMSIAYLDPGNI) form a helical membrane-spanning segment. At 91 to 95 (ESDLQ) the chain is on the extracellular side. A helical transmembrane segment spans residues 96–117 (SGAVAGFKLLWVLLLATIVGLL). The Cytoplasmic segment spans residues 118–154 (LQRLAARLGVVTGLHLAEVCHRQYPKVPRIILWLMVE). The helical transmembrane segment at 155 to 175 (LAIIGSDMQEVIGSAIAINLL) threads the bilayer. At 176–179 (SAGR) the chain is on the extracellular side. A helical membrane pass occupies residues 180–194 (VPLWGGVLITIADTF). Topologically, residues 195-208 (VFLFLDKYGLRKLE) are cytoplasmic. Residues 209-229 (AFFGFLITIMALTFGYEYITV) traverse the membrane as a helical segment. Residues 230–255 (KPSQSQVLRGMFVPSCPGCRTPQVEQ) are Extracellular-facing. A helical transmembrane segment spans residues 256–276 (AVGIVGAVIMPHNMYLHSALV). The Cytoplasmic portion of the chain corresponds to 277 to 301 (KSRQVNRANKQEVREANKYFFIESC). A helical transmembrane segment spans residues 302 to 322 (IALFVSFIINVFVVSVFAEAF). At 323–360 (FEKTNKQVVEVCKNNSSPHADLFPSDNSTLAVDIYKGG) the chain is on the extracellular side. N-linked (GlcNAc...) asparagine glycosylation is found at Asn336 and Asn349. The chain crosses the membrane as a helical span at residues 361–381 (VVLGCYFGPAALYIWAVGILA). Residues 382-408 (AGQSSTMTGTYSGQFVMEGFLNLKWSR) are Cytoplasmic-facing. Residues 409–429 (FARVILTRSIAIIPTLLVAVF) form a helical membrane-spanning segment. At 430–440 (QDVEHLTGMND) the chain is on the extracellular side. A helical transmembrane segment spans residues 441–461 (FLNVLQSLQLPFALIPILTFT). Topologically, residues 462 to 482 (SLRPVMSEFSNGIGWRIAGGI) are cytoplasmic. The chain crosses the membrane as a helical span at residues 483 to 503 (LVLIVCSINMYFVVVYVQELG). The Extracellular segment spans residues 504–506 (HVA). A helical membrane pass occupies residues 507–527 (LYVVAAVVSVAYLTFVFYLGW). Over 528–568 (QCLIALGLSFLDCGRSYRLGLTAQPELYLLNTVDADSVVSR) the chain is Cytoplasmic. A required for early endosome targeting region spans residues 555–559 (YLLNT). Leu556, Ser564, and Ser567 each carry phosphoserine.

This sequence belongs to the NRAMP family. Forms a complex with NDFIP1 and NEDD4L, in cortical neurons, in response to iron and cobalt exposure; this interaction leads to SLC11A2 ubiquitination by NEDD4L and proteasome-dependent degradation. Interacts with NDFIP1, NDFIP2 and WWP2; this interaction leads to SLC11A2 ubiquitination by WWP2 and subsequent proteasome-dependent degradation. Interacts with COX2 and TOM6 at the outer mitochondrion membrane. Interacts with ARRDC1; this interaction regulates the incorporation of SLC11A2 into extracellular vesicles through an ubiquitination-dependent mechanism. Interacts with ARRDC4; controls the incorporation of SLC11A2 into extracellular vesicles through an ubiquitination-dependent mechanism. Ubiquitinated by WWP2. In terms of processing, N-glycosylated. As to expression, abundantly expressed in erythroid precursor cells (at protein level). Expressed in duodenum (at protein level).

It localises to the golgi apparatus. The protein resides in the trans-Golgi network membrane. The protein localises to the early endosome membrane. Its subcellular location is the recycling endosome membrane. It is found in the cell membrane. It localises to the late endosome membrane. The protein resides in the lysosome membrane. The protein localises to the apical cell membrane. Its subcellular location is the mitochondrion outer membrane. It is found in the extracellular vesicle membrane. The enzyme catalyses Fe(2+)(in) + H(+)(in) = Fe(2+)(out) + H(+)(out). It carries out the reaction Co(2+)(out) + H(+)(out) = Co(2+)(in) + H(+)(in). The catalysed reaction is Cd(2+)(out) + H(+)(out) = Cd(2+)(in) + H(+)(in). It catalyses the reaction Mn(2+)(in) + H(+)(in) = Mn(2+)(out) + H(+)(out). The enzyme catalyses Zn(2+)(out) + H(+)(out) = Zn(2+)(in) + H(+)(in). It carries out the reaction Ni(2+)(out) + H(+)(out) = Ni(2+)(in) + H(+)(in). The catalysed reaction is H(+)(in) = H(+)(out). It catalyses the reaction Fe(2+)(in) = Fe(2+)(out). In terms of biological role, proton-coupled metal ion symporter operating with a proton to metal ion stoichiometry of 1:1. Selectively transports various divalent metal cations, in decreasing affinity: Cd(2+) &gt; Fe(2+) &gt; Co(2+), Mn(2+) &gt;&gt; Zn(2+), Ni(2+), VO(2+). Essential for maintenance of iron homeostasis by modulating intestinal absorption of dietary Fe(2+) and TF-associated endosomal Fe(2+) transport in erythroid precursors and other cells. Enables Fe(2+) and Mn(2+) ion entry into mitochondria, and is thus expected to promote mitochondrial heme synthesis, iron-sulfur cluster biogenesis and antioxidant defense. Can mediate uncoupled fluxes of either protons or metal ions. This is Natural resistance-associated macrophage protein 2 (Slc11a2) from Mus musculus (Mouse).